Reading from the N-terminus, the 357-residue chain is 3-isopropylmalate dehydrogenase (357 aa).

Residue 76–89 coordinates NAD(+); the sequence is GPQWDTIDPALRPE. Substrate-binding residues include Arg96, Arg106, Arg134, and Asp224. Mg(2+) is bound by residues Asp224, Asp248, and Asp252. NAD(+) is bound at residue 282–294; that stretch reads GSAPDIAGQGIAN.

This sequence belongs to the isocitrate and isopropylmalate dehydrogenases family. LeuB type 1 subfamily. In terms of assembly, homodimer. Mg(2+) serves as cofactor. Requires Mn(2+) as cofactor.

It is found in the cytoplasm. It carries out the reaction (2R,3S)-3-isopropylmalate + NAD(+) = 4-methyl-2-oxopentanoate + CO2 + NADH. Its pathway is amino-acid biosynthesis; L-leucine biosynthesis; L-leucine from 3-methyl-2-oxobutanoate: step 3/4. Its function is as follows. Catalyzes the oxidation of 3-carboxy-2-hydroxy-4-methylpentanoate (3-isopropylmalate) to 3-carboxy-4-methyl-2-oxopentanoate. The product decarboxylates to 4-methyl-2 oxopentanoate. This is 3-isopropylmalate dehydrogenase from Xanthomonas campestris pv. campestris (strain 8004).